Reading from the N-terminus, the 91-residue chain is Defensin-like protein 220 (91 aa).

The first 19 residues, 1-19, serve as a signal peptide directing secretion; that stretch reads MKTIFFFITFIVLVSSCTS. 3 disulfides stabilise this stretch: Cys-61-Cys-78, Cys-64-Cys-83, and Cys-68-Cys-85.

It belongs to the DEFL family.

The protein localises to the secreted. This chain is Defensin-like protein 220, found in Arabidopsis thaliana (Mouse-ear cress).